Here is a 180-residue protein sequence, read N- to C-terminus: Endoribonuclease YbeY (180 aa).

Zn(2+) is bound by residues His136, His140, and His146.

Belongs to the endoribonuclease YbeY family. Requires Zn(2+) as cofactor.

It localises to the cytoplasm. Functionally, single strand-specific metallo-endoribonuclease involved in late-stage 70S ribosome quality control and in maturation of the 3' terminus of the 16S rRNA. This is Endoribonuclease YbeY from Synechococcus sp. (strain CC9902).